The sequence spans 280 residues: Succinate dehydrogenase [ubiquinone] iron-sulfur subunit, mitochondrial (280 aa).

Residues 1–28 constitute a mitochondrion transit peptide; that stretch reads MAAVVALSLRRRFPAAALGGARLQACRG. One can recognise a 2Fe-2S ferredoxin-type domain in the interval 40–133; it reads KKFAIYRWDP…VSKIYPLPHM (94 aa). N6-acetyllysine is present on residues Lys-51 and Lys-55. [2Fe-2S] cluster-binding residues include Cys-93, Cys-98, Cys-101, and Cys-113. The interaction with SDHAF1 stretch occupies residues 146–218; the sequence is FYAQYKSIEP…PAVLMQAYRW (73 aa). Residues 176–206 form the 4Fe-4S ferredoxin-type domain; it reads DREKLDGLYECILCACCSTSCPSYWWNGDKY. Cys-186, Cys-189, and Cys-192 together coordinate [4Fe-4S] cluster. Cys-196 is a [3Fe-4S] cluster binding site. Position 201 (Trp-201) interacts with a ubiquinone. [3Fe-4S] cluster-binding residues include Cys-243 and Cys-249. Cys-253 contributes to the [4Fe-4S] cluster binding site.

Belongs to the succinate dehydrogenase/fumarate reductase iron-sulfur protein family. In terms of assembly, component of complex II composed of four subunits: the flavoprotein (FP) SDHA, iron-sulfur protein (IP) SDHB, and a cytochrome b560 composed of SDHC and SDHD. Interacts with SDHAF1; the interaction is required for iron-sulfur cluster incorporation into SDHB. It depends on [2Fe-2S] cluster as a cofactor. The cofactor is [3Fe-4S] cluster. Requires [4Fe-4S] cluster as cofactor.

The protein localises to the mitochondrion inner membrane. It catalyses the reaction a quinone + succinate = fumarate + a quinol. The catalysed reaction is (R)-malate + a quinone = enol-oxaloacetate + a quinol. It carries out the reaction (S)-malate + a quinone = enol-oxaloacetate + a quinol. The protein operates within carbohydrate metabolism; tricarboxylic acid cycle; fumarate from succinate (eukaryal route): step 1/1. With respect to regulation, enol-oxaloacetate inhibits the succinate dehydrogenase activity. In terms of biological role, iron-sulfur protein (IP) subunit of the succinate dehydrogenase complex (mitochondrial respiratory chain complex II), responsible for transferring electrons from succinate to ubiquinone (coenzyme Q). SDH also oxidizes malate to the non-canonical enol form of oxaloacetate, enol-oxaloacetate. Enol-oxaloacetate, which is a potent inhibitor of the succinate dehydrogenase activity, is further isomerized into keto-oxaloacetate. The protein is Succinate dehydrogenase [ubiquinone] iron-sulfur subunit, mitochondrial (SDHB) of Bos taurus (Bovine).